Here is a 205-residue protein sequence, read N- to C-terminus: Riboflavin kinase (205 aa).

Positions M1–R24 are disordered. Mg(2+) is bound by residues T44 and N46. Residue E104 is the Nucleophile of the active site.

The protein belongs to the flavokinase family. It depends on Zn(2+) as a cofactor. The cofactor is Mg(2+).

It catalyses the reaction riboflavin + ATP = FMN + ADP + H(+). Its pathway is cofactor biosynthesis; FMN biosynthesis; FMN from riboflavin (ATP route): step 1/1. Catalyzes the phosphorylation of riboflavin (vitamin B2) to form flavin mononucleotide (FMN) coenzyme. This is Riboflavin kinase (fmn1) from Aspergillus terreus (strain NIH 2624 / FGSC A1156).